The sequence spans 724 residues: N-alpha-acetyltransferase 35, NatC auxiliary subunit (724 aa).

The protein belongs to the MAK10 family. As to quaternary structure, component of the N-terminal acetyltransferase C (NatC) complex.

It localises to the cytoplasm. Its function is as follows. Auxillary component of the N-terminal acetyltransferase C (NatC) complex which catalyzes acetylation of N-terminal methionine residues. N-terminal acetylation protects proteins from ubiquitination and degradation by the N-end rule pathway. Regulates cell proliferation during embryonic development. This is N-alpha-acetyltransferase 35, NatC auxiliary subunit (naa35) from Danio rerio (Zebrafish).